Consider the following 205-residue polypeptide: Dephospho-CoA kinase (205 aa).

Positions isoleucine 7–glutamate 205 constitute a DPCK domain. Alanine 15 to alanine 20 is an ATP binding site.

The protein belongs to the CoaE family.

It localises to the cytoplasm. It catalyses the reaction 3'-dephospho-CoA + ATP = ADP + CoA + H(+). Its pathway is cofactor biosynthesis; coenzyme A biosynthesis; CoA from (R)-pantothenate: step 5/5. In terms of biological role, catalyzes the phosphorylation of the 3'-hydroxyl group of dephosphocoenzyme A to form coenzyme A. This chain is Dephospho-CoA kinase, found in Borrelia garinii subsp. bavariensis (strain ATCC BAA-2496 / DSM 23469 / PBi) (Borreliella bavariensis).